A 220-amino-acid chain; its full sequence is Deoxyribose-phosphate aldolase (220 aa).

Asp-89 acts as the Proton donor/acceptor in catalysis. Residue Lys-151 is the Schiff-base intermediate with acetaldehyde of the active site. Lys-180 (proton donor/acceptor) is an active-site residue.

It belongs to the DeoC/FbaB aldolase family. DeoC type 1 subfamily.

Its subcellular location is the cytoplasm. The catalysed reaction is 2-deoxy-D-ribose 5-phosphate = D-glyceraldehyde 3-phosphate + acetaldehyde. Its pathway is carbohydrate degradation; 2-deoxy-D-ribose 1-phosphate degradation; D-glyceraldehyde 3-phosphate and acetaldehyde from 2-deoxy-alpha-D-ribose 1-phosphate: step 2/2. Catalyzes a reversible aldol reaction between acetaldehyde and D-glyceraldehyde 3-phosphate to generate 2-deoxy-D-ribose 5-phosphate. The polypeptide is Deoxyribose-phosphate aldolase (Staphylococcus saprophyticus subsp. saprophyticus (strain ATCC 15305 / DSM 20229 / NCIMB 8711 / NCTC 7292 / S-41)).